Consider the following 258-residue polypeptide: Granzyme M (258 aa).

The Peptidase S1 domain maps to 21–250; the sequence is IIGGREAVPH…YSSWIRKVIG (230 aa). Cysteine 46 and cysteine 62 are disulfide-bonded. Active-site charge relay system residues include histidine 61 and aspartate 107. Positions 122-141 are disordered; it reads NVKPLALPRKPRDKPAEGSR. 3 disulfide bridges follow: cysteine 142/cysteine 210, cysteine 173/cysteine 189, and cysteine 200/cysteine 226. N-linked (GlcNAc...) asparagine glycosylation is present at asparagine 174. The active-site Charge relay system is serine 204. Asparagine 225 carries N-linked (GlcNAc...) asparagine glycosylation.

This sequence belongs to the peptidase S1 family. Granzyme subfamily.

The protein resides in the secreted. The protein localises to the cytoplasmic granule. Its function is as follows. Cleaves peptide substrates after methionine, leucine, and norleucine. Physiological substrates include EZR, alpha-tubulins and the apoptosis inhibitor BIRC5/Survivin. Promotes caspase activation and subsequent apoptosis of target cells. This is Granzyme M (Gzmm) from Rattus norvegicus (Rat).